Consider the following 584-residue polypeptide: Myo-inositol transporter 1 (584 aa).

Residues 1-81 (MGIHIPYLTS…TSVMITFNQS (81 aa)) are Cytoplasmic-facing. T12 bears the Phosphothreonine mark. The interval 13–42 (SQSNVGDAVGNADSVEFNSEHDSPSKRGKI) is disordered. Residues S26, S31, S35, S37, and S46 each carry the phosphoserine modification. The span at 30–42 (NSEHDSPSKRGKI) shows a compositional bias: basic and acidic residues. The chain crosses the membrane as a helical span at residues 82–102 (LSPFIITLTFVASISGFMFGY). Over 103–129 (DTGYISSALISIGTDLDHKVLTYGEKE) the chain is Extracellular. A helical transmembrane segment spans residues 130-150 (IVTAATSLGALITSIFAGTAA). The Cytoplasmic portion of the chain corresponds to 151–163 (DIFGRKRCLMGSN). The chain crosses the membrane as a helical span at residues 164-184 (LMFVIGAILQVSAHTFWQMAV). Residues 185–186 (GR) are Extracellular-facing. The helical transmembrane segment at 187–207 (LIMGFGVGIGSLIAPLFISEI) threads the bilayer. Over 208–215 (APKMIRGR) the chain is Cytoplasmic. A helical membrane pass occupies residues 216 to 236 (LTVINSLWLTGGQLVAYGCGA). The Extracellular portion of the chain corresponds to 237 to 246 (GLNYVNNGWR). A helical membrane pass occupies residues 247–267 (ILVGLSLIPTAVQFTCLCFLP). The Cytoplasmic portion of the chain corresponds to 268–349 (DTPRYYVMKG…IGCGLQAIQQ (82 aa)). The chain crosses the membrane as a helical span at residues 350–370 (FTGWNSLMYFSGTIFETVGFK). A glycan (N-linked (GlcNAc...) asparagine) is linked at N371. Over 371–376 (NSSAVS) the chain is Extracellular. A helical membrane pass occupies residues 377–397 (IIVSGTNFIFTLVAFFSIDKI). The Cytoplasmic segment spans residues 398–400 (GRR). A helical transmembrane segment spans residues 401–421 (TILLIGLPGMTMALVVCSIAF). The Extracellular portion of the chain corresponds to 422 to 441 (HFLGIKFDGAVAVVVSSGFS). The helical transmembrane segment at 442-462 (SWGIVIIVFIIVFAAFYALGI) threads the bilayer. At 463–486 (GTVPWQQSELFPQNVRGIGTSYAT) the chain is on the cytoplasmic side. Residues 487-507 (ATNWAGSLVIASTFLTMLQNI) traverse the membrane as a helical segment. Topologically, residues 508–510 (TPA) are extracellular. Residues 511–531 (GTFAFFAGLSCLSTIFCYFCY) form a helical membrane-spanning segment. At 532–584 (PELSGLELEEVQTILKDGFNIKASKALAKKRKQQVARVHELKYEPTQEIIEDI) the chain is on the cytoplasmic side. K573 participates in a covalent cross-link: Glycyl lysine isopeptide (Lys-Gly) (interchain with G-Cter in ubiquitin).

It belongs to the major facilitator superfamily. Sugar transporter (TC 2.A.1.1) family.

It is found in the cell membrane. It carries out the reaction myo-inositol(out) + H(+)(out) = myo-inositol(in) + H(+)(in). Functionally, major transporter for myo-inositol. This is Myo-inositol transporter 1 (ITR1) from Saccharomyces cerevisiae (strain ATCC 204508 / S288c) (Baker's yeast).